The sequence spans 182 residues: Glutamyl-tRNA(Gln) amidotransferase subunit F, mitochondrial (182 aa).

It belongs to the GatF family. Subunit of the heterotrimeric GatFAB amidotransferase (AdT) complex, composed of A, B and F subunits.

It is found in the mitochondrion inner membrane. The catalysed reaction is L-glutamyl-tRNA(Gln) + L-glutamine + ATP + H2O = L-glutaminyl-tRNA(Gln) + L-glutamate + ADP + phosphate + H(+). Functionally, allows the formation of correctly charged Gln-tRNA(Gln) through the transamidation of misacylated Glu-tRNA(Gln) in the mitochondria. The reaction takes place in the presence of glutamine and ATP through an activated gamma-phospho-Glu-tRNA(Gln). Required for proper protein synthesis within the mitochondrion. The sequence is that of Glutamyl-tRNA(Gln) amidotransferase subunit F, mitochondrial from Candida tropicalis (strain ATCC MYA-3404 / T1) (Yeast).